The chain runs to 916 residues: Neurofilament medium polypeptide (916 aa).

Polar residues predominate over residues 1 to 10 (MSYTLDSLGN). The disordered stretch occupies residues 1–51 (MSYTLDSLGNPSAYRRVTETRSSFSRVSGSPSSGFRSQSWSRGSPSTVSSS). The residue at position 2 (serine 2) is an N-acetylserine. The interval 2–104 (SYTLDSLGNP…KLSRSNEKEQ (103 aa)) is head. Over residues 21–44 (RSSFSRVSGSPSSGFRSQSWSRGS) the composition is skewed to low complexity. Serine 30 is modified (phosphoserine). Arginine 42 is modified (omega-N-methylarginine). The O-linked (GlcNAc) threonine glycan is linked to threonine 47. Serine 99 carries the post-translational modification Phosphoserine. One can recognise an IF rod domain in the interval 101–412 (EKEQLQGLND…KLLEGEETRF (312 aa)). The tract at residues 105-136 (LQGLNDRFAGYIEKVHYLEQQNKEIEAEIQAL) is coil 1A. The tract at residues 137–149 (RQKQASHAQLGDA) is linker 1. The tract at residues 150–248 (YDQEIRELRA…EEEVADLLAQ (99 aa)) is coil 1B. The residue at position 226 (serine 226) is a Phosphoserine. The tract at residues 249 to 265 (IQASHITVERKDYLKTD) is linker 12. The tract at residues 266–287 (ISTALKEIRSQLESHSDQNMHQ) is coil 2A. The interval 288 to 291 (AEEW) is linker 2. The interval 292–412 (FKCRYAKLTE…KLLEGEETRF (121 aa)) is coil 2B. Tyrosine 320 carries the post-translational modification Phosphotyrosine. Residues serine 346 and serine 418 each carry the phosphoserine modification. A tail region spans residues 413–916 (STFAGSITGP…AIVKEVTQSD (504 aa)). An O-linked (GlcNAc) threonine glycan is attached at threonine 431. Serine 467 and serine 483 each carry phosphoserine. Residues 485–851 (KEEKKEAAEE…KKGGDKSEEK (367 aa)) form a disordered region. Residues 493 to 505 (EEKEEEPEAEEEE) show a composition bias toward acidic residues. Residue serine 511 is modified to Phosphoserine. The segment covering 521–541 (KEEEGEKEEEEGQEEEEEEDE) has biased composition (acidic residues). Basic and acidic residues predominate over residues 542–561 (GAKSDQAEEGGSEKEGSSEK). A phosphoserine mark is found at serine 545, serine 553, serine 558, and serine 559. Residues 562–582 (EEGEQEEGETEAEAEGEEAEA) are compositionally biased toward acidic residues. Phosphothreonine is present on threonine 571. Over residues 583–614 (KEEKKVEEKSEEVATKEELVADAKVEKPEKAK) the composition is skewed to basic and acidic residues. 6 repeat units span residues 614-626 (KSPV…EEKG), 627-639 (KSPV…EEKG), 640-652 (KSPV…EEKG), 653-665 (KSPV…EEKG), 666-678 (KSPV…EEKA), and 679-691 (KSPV…EEAK). A 6 X 13 AA approximate tandem repeats of K-S-P-V-[PS]-K-S-P-V-E-E-[KA]-[GAK] region spans residues 614 to 691 (KSPVPKSPVE…VPKSPVEEAK (78 aa)). Phosphoserine occurs at positions 641 and 646. Phosphoserine is present on residues serine 680 and serine 685. Basic and acidic residues-rich tracts occupy residues 686–701 (PVEE…KGEQ), 707–742 (KEVK…KEEA), and 755–778 (VHLE…EKAG). Residue serine 736 is modified to Phosphoserine. Serine 783, serine 821, and serine 837 each carry phosphoserine. Positions 788-828 (SDKGAKGSRKEDIAVNGEVEGKEEVEQETKEKGSGREEEKG) are enriched in basic and acidic residues. Residues 839–851 (ADEKKGGDKSEEK) show a composition bias toward basic and acidic residues.

The protein belongs to the intermediate filament family. Forms heterodimers with NEFL; which can further hetero-oligomerize (in vitro). Forms heterodimers with INA (in vitro). Post-translationally, there are a number of repeats of the tripeptide K-S-P, NFM is phosphorylated on a number of the serines in this motif. It is thought that phosphorylation of NFM results in the formation of interfilament cross bridges that are important in the maintenance of axonal caliber. In terms of processing, phosphorylation seems to play a major role in the functioning of the larger neurofilament polypeptides (NF-M and NF-H), the levels of phosphorylation being altered developmentally and coincidentally with a change in the neurofilament function. Phosphorylated in the head and rod regions by the PKC kinase PKN1, leading to the inhibition of polymerization.

Its subcellular location is the cytoplasm. The protein localises to the cytoskeleton. It is found in the cell projection. The protein resides in the axon. Its function is as follows. Neurofilaments usually contain three intermediate filament proteins: NEFL, NEFM, and NEFH which are involved in the maintenance of neuronal caliber. May additionally cooperate with the neuronal intermediate filament proteins PRPH and INA to form neuronal filamentous networks. The polypeptide is Neurofilament medium polypeptide (NEFM) (Homo sapiens (Human)).